The following is a 364-amino-acid chain: Phosphoserine aminotransferase (364 aa).

Residue R46 participates in L-glutamate binding. Pyridoxal 5'-phosphate is bound by residues 80 to 81, W106, T157, D176, and Q199; that span reads AR. An N6-(pyridoxal phosphate)lysine modification is found at K200. 241 to 242 is a pyridoxal 5'-phosphate binding site; the sequence is NT.

It belongs to the class-V pyridoxal-phosphate-dependent aminotransferase family. SerC subfamily. As to quaternary structure, homodimer. Pyridoxal 5'-phosphate is required as a cofactor.

Its subcellular location is the cytoplasm. It carries out the reaction O-phospho-L-serine + 2-oxoglutarate = 3-phosphooxypyruvate + L-glutamate. It catalyses the reaction 4-(phosphooxy)-L-threonine + 2-oxoglutarate = (R)-3-hydroxy-2-oxo-4-phosphooxybutanoate + L-glutamate. It participates in amino-acid biosynthesis; L-serine biosynthesis; L-serine from 3-phospho-D-glycerate: step 2/3. Its pathway is cofactor biosynthesis; pyridoxine 5'-phosphate biosynthesis; pyridoxine 5'-phosphate from D-erythrose 4-phosphate: step 3/5. In terms of biological role, catalyzes the reversible conversion of 3-phosphohydroxypyruvate to phosphoserine and of 3-hydroxy-2-oxo-4-phosphonooxybutanoate to phosphohydroxythreonine. This Vibrio vulnificus (strain CMCP6) protein is Phosphoserine aminotransferase.